Consider the following 337-residue polypeptide: tRNA N6-adenosine threonylcarbamoyltransferase (337 aa).

Fe cation contacts are provided by H111 and H115. Substrate-binding positions include 134–138 (LVSGG), D167, G180, and N272. Position 300 (D300) interacts with Fe cation.

The protein belongs to the KAE1 / TsaD family. Requires Fe(2+) as cofactor.

It localises to the cytoplasm. It carries out the reaction L-threonylcarbamoyladenylate + adenosine(37) in tRNA = N(6)-L-threonylcarbamoyladenosine(37) in tRNA + AMP + H(+). In terms of biological role, required for the formation of a threonylcarbamoyl group on adenosine at position 37 (t(6)A37) in tRNAs that read codons beginning with adenine. Is involved in the transfer of the threonylcarbamoyl moiety of threonylcarbamoyl-AMP (TC-AMP) to the N6 group of A37, together with TsaE and TsaB. TsaD likely plays a direct catalytic role in this reaction. The sequence is that of tRNA N6-adenosine threonylcarbamoyltransferase from Aeromonas hydrophila subsp. hydrophila (strain ATCC 7966 / DSM 30187 / BCRC 13018 / CCUG 14551 / JCM 1027 / KCTC 2358 / NCIMB 9240 / NCTC 8049).